A 299-amino-acid polypeptide reads, in one-letter code: Ubiquinol-cytochrome c reductase complex assembly factor 1 (299 aa).

Belongs to the CBP3 family. In terms of assembly, interacts with UQCC2. Interacts with UQCC3. Forms a complex, named COMB/coordinator of mitochondrial CYTB biogenesis, composed of UQCC1, UQCC2, UQCC4, UQCC5 and UQCC6; stabilizes nascent cytochrome b/MT-CYB and promotes its membrane insertion. Forms a complex, named COMB/coordinator of mitochondrial CYTB biogenesis, composed of UQCC1, UQCC2, UQCC4, UQCC5 and UQCC6; stabilizes nascent cytochrome b/MT-CYB and promotes its membrane insertion. Forms a complex, named COMA, composed of UQCC1, UQCC2 and UQCC4; activates MT-CYB translation. Forms a complex, named COMC, composed of UQCC1, UQCC2; UQCC3 and UQCC4; mediates MT-CYB hemylation and association with the first nuclear-encoded CIII subunit UQCRQ.

The protein resides in the mitochondrion inner membrane. The protein localises to the cytoplasmic vesicle. Functionally, required for the assembly of the ubiquinol-cytochrome c reductase complex (mitochondrial respiratory chain complex III or cytochrome b-c1 complex). Involved in cytochrome b translation and/or stability. In Homo sapiens (Human), this protein is Ubiquinol-cytochrome c reductase complex assembly factor 1 (UQCC1).